Consider the following 243-residue polypeptide: Pleckstrin homology domain-containing family B member 1 (243 aa).

Residues 21-128 (ALVRGGWLWR…WKTALLEANS (108 aa)) enclose the PH domain.

Homodimer. Interacts (via PH domain) with MYO1C. Interacts (via PH domain) with MYO7A. Binds transducins. In terms of tissue distribution, highly expressed in retina and brain. Levels are very low or not detectable in all other tissues tested.

Its subcellular location is the membrane. It localises to the cytoplasm. The chain is Pleckstrin homology domain-containing family B member 1 (PLEKHB1) from Homo sapiens (Human).